Consider the following 101-residue polypeptide: NAD(P)H-quinone oxidoreductase subunit 4L, chloroplastic (101 aa).

Transmembrane regions (helical) follow at residues 2–22 (ILEHVLVLSAYLFSIGIYGLI), 32–52 (MCLELILNSVNLNFVTFSDFF), and 61–81 (IFSIFIIAIAAAEAAIGLAIV).

Belongs to the complex I subunit 4L family. As to quaternary structure, NDH is composed of at least 16 different subunits, 5 of which are encoded in the nucleus.

It localises to the plastid. It is found in the chloroplast thylakoid membrane. It carries out the reaction a plastoquinone + NADH + (n+1) H(+)(in) = a plastoquinol + NAD(+) + n H(+)(out). The enzyme catalyses a plastoquinone + NADPH + (n+1) H(+)(in) = a plastoquinol + NADP(+) + n H(+)(out). Its function is as follows. NDH shuttles electrons from NAD(P)H:plastoquinone, via FMN and iron-sulfur (Fe-S) centers, to quinones in the photosynthetic chain and possibly in a chloroplast respiratory chain. The immediate electron acceptor for the enzyme in this species is believed to be plastoquinone. Couples the redox reaction to proton translocation, and thus conserves the redox energy in a proton gradient. This Oenothera argillicola (Appalachian evening primrose) protein is NAD(P)H-quinone oxidoreductase subunit 4L, chloroplastic.